Consider the following 317-residue polypeptide: Ribose-phosphate pyrophosphokinase (317 aa).

Residues aspartate 43–glutamate 45 and arginine 102–glutamine 103 each bind ATP. Lysine 106 and arginine 110 together coordinate ADP. Histidine 136 is a binding site for Mg(2+). ADP-binding positions include glutamine 141 and aspartate 149–histidine 150. Aspartate 175 contacts Mg(2+). Residue lysine 198 is part of the active site. D-ribose 5-phosphate is bound by residues arginine 200, aspartate 224, and aspartate 228–threonine 232. Serine 311–serine 313 contacts ADP.

The protein belongs to the ribose-phosphate pyrophosphokinase family. Class I subfamily. As to quaternary structure, homohexamer; trimer of dimers. Mg(2+) serves as cofactor.

It is found in the cytoplasm. The catalysed reaction is D-ribose 5-phosphate + ATP = 5-phospho-alpha-D-ribose 1-diphosphate + AMP + H(+). Its pathway is metabolic intermediate biosynthesis; 5-phospho-alpha-D-ribose 1-diphosphate biosynthesis; 5-phospho-alpha-D-ribose 1-diphosphate from D-ribose 5-phosphate (route I): step 1/1. Its activity is regulated as follows. Activated by inorganic phosphate, and to a lesser extent by sulfate ions. In addition to form a complex with ATP, Mg(2+) also acts as a cofactor. Strongly inhibited by ADP through competitive binding at the activation site and at a specific allosteric site. Less strongly inhibited by alpha,beta-methylene ATP (mADP), AMP, GDP, GMP and UTP. Functionally, involved in the biosynthesis of the central metabolite phospho-alpha-D-ribosyl-1-pyrophosphate (PRPP) via the transfer of pyrophosphoryl group from ATP to 1-hydroxyl of ribose-5-phosphate (Rib-5-P). The sequence is that of Ribose-phosphate pyrophosphokinase from Bacillus subtilis (strain 168).